The following is a 507-amino-acid chain: RNA polymerase I-specific transcription initiation factor RRN11 (507 aa).

Polar residues predominate over residues 37–47 (KSTTTDSLPTP). Disordered regions lie at residues 37–76 (KSTT…LQQK) and 89–124 (GEIY…SDEE). Residues 97 to 108 (SETDSQEEETEE) are compositionally biased toward acidic residues. Residues 109–124 (GGEHDTGIDKEDSDEE) are compositionally biased toward basic and acidic residues.

Component of the core factor (CF) complex, which consists of RRN6, RRN7 and RRN11. The CF heterotrimer may further dimerize to form a hexamer. RRN11 interacts with RRN6, RRN7 and SPT15.

It localises to the nucleus. Its subcellular location is the nucleolus. Its function is as follows. Acts as a component of the core factor (CF) complex which is essential for the initiation of rDNA transcription by RNA polymerase I. After binding of UAF (upstream activation factor) to an upstream element of the promoter, CF is recruited in a SPT15/TBP-dependent manner to form a preinitiation complex. The protein is RNA polymerase I-specific transcription initiation factor RRN11 (RRN11) of Saccharomyces cerevisiae (strain ATCC 204508 / S288c) (Baker's yeast).